A 483-amino-acid polypeptide reads, in one-letter code: Aspartyl/glutamyl-tRNA(Asn/Gln) amidotransferase subunit B (483 aa).

It belongs to the GatB/GatE family. GatB subfamily. In terms of assembly, heterotrimer of A, B and C subunits.

It carries out the reaction L-glutamyl-tRNA(Gln) + L-glutamine + ATP + H2O = L-glutaminyl-tRNA(Gln) + L-glutamate + ADP + phosphate + H(+). The catalysed reaction is L-aspartyl-tRNA(Asn) + L-glutamine + ATP + H2O = L-asparaginyl-tRNA(Asn) + L-glutamate + ADP + phosphate + 2 H(+). Functionally, allows the formation of correctly charged Asn-tRNA(Asn) or Gln-tRNA(Gln) through the transamidation of misacylated Asp-tRNA(Asn) or Glu-tRNA(Gln) in organisms which lack either or both of asparaginyl-tRNA or glutaminyl-tRNA synthetases. The reaction takes place in the presence of glutamine and ATP through an activated phospho-Asp-tRNA(Asn) or phospho-Glu-tRNA(Gln). This Brachyspira hyodysenteriae (strain ATCC 49526 / WA1) protein is Aspartyl/glutamyl-tRNA(Asn/Gln) amidotransferase subunit B.